The sequence spans 146 residues: 3-dehydroquinate dehydratase (146 aa).

Tyr-22 acts as the Proton acceptor in catalysis. Residues Asn-74, His-80, and Asp-87 each contribute to the substrate site. The Proton donor role is filled by His-100. Substrate contacts are provided by residues 101-102 (LS) and Arg-111.

It belongs to the type-II 3-dehydroquinase family. In terms of assembly, homododecamer.

It catalyses the reaction 3-dehydroquinate = 3-dehydroshikimate + H2O. The protein operates within metabolic intermediate biosynthesis; chorismate biosynthesis; chorismate from D-erythrose 4-phosphate and phosphoenolpyruvate: step 3/7. Catalyzes a trans-dehydration via an enolate intermediate. This chain is 3-dehydroquinate dehydratase, found in Clostridium perfringens (strain 13 / Type A).